The following is a 285-amino-acid chain: GTP-binding protein 8 (285 aa).

Residues 110–283 (RQPEVCFIGR…KCFIADITGS (174 aa)) form the EngB-type G domain. GTP contacts are provided by residues 118–125 (GRSNVGKS), 147–151 (GHTKK), 165–168 (DMPG), 227–230 (TKID), and 262–264 (ISA). Positions 125 and 149 each coordinate Mg(2+).

This sequence belongs to the TRAFAC class TrmE-Era-EngA-EngB-Septin-like GTPase superfamily. EngB GTPase family. The cofactor is Mg(2+).

The polypeptide is GTP-binding protein 8 (Gtpbp8) (Rattus norvegicus (Rat)).